The following is a 119-amino-acid chain: Beta-2-microglobulin (119 aa).

The N-terminal stretch at Met-1 to Ala-20 is a signal peptide. One can recognise an Ig-like C1-type domain in the interval Pro-25–Lys-114. Residues Cys-45 and Cys-100 are joined by a disulfide bond.

Belongs to the beta-2-microglobulin family. In terms of assembly, heterodimer of an alpha chain and a beta chain. Beta-2-microglobulin is the beta-chain of major histocompatibility complex class I molecules.

It is found in the secreted. In terms of biological role, component of the class I major histocompatibility complex (MHC). Involved in the presentation of peptide antigens to the immune system. This Lagothrix lagotricha (Brown woolly monkey) protein is Beta-2-microglobulin (B2M).